The chain runs to 167 residues: MINVEIIRNYNKWREHRKINKGLIKKITQNVLVRFDNFSKIKQFELSILLTNTAEILTLNQQFRSIEKATNVLSFPNNELNWHNLYSKLEFLYYSDYMHLGDIAFCYEVIYNESCEQQKTFENHFIHMLIHSILHLIGFDHQNDTDANIMESLEIEILSYFGIPSPY.

Zn(2+) contacts are provided by His-131, His-135, and His-141.

It belongs to the endoribonuclease YbeY family. It depends on Zn(2+) as a cofactor.

It localises to the cytoplasm. Its function is as follows. Single strand-specific metallo-endoribonuclease involved in late-stage 70S ribosome quality control and in maturation of the 3' terminus of the 16S rRNA. The polypeptide is Endoribonuclease YbeY (Rickettsia prowazekii (strain Madrid E)).